The sequence spans 468 residues: Cysteine--tRNA ligase (468 aa).

Zn(2+) is bound at residue Cys-27. Residues 29–39 (PTVYNYFHIGN) carry the 'HIGH' region motif. Residues Cys-207, His-232, and Glu-236 each coordinate Zn(2+). A 'KMSKS' region motif is present at residues 264-268 (KMAKS). Residue Lys-267 participates in ATP binding.

The protein belongs to the class-I aminoacyl-tRNA synthetase family. In terms of assembly, monomer. Requires Zn(2+) as cofactor.

The protein localises to the cytoplasm. It catalyses the reaction tRNA(Cys) + L-cysteine + ATP = L-cysteinyl-tRNA(Cys) + AMP + diphosphate. The sequence is that of Cysteine--tRNA ligase from Acetivibrio thermocellus (strain ATCC 27405 / DSM 1237 / JCM 9322 / NBRC 103400 / NCIMB 10682 / NRRL B-4536 / VPI 7372) (Clostridium thermocellum).